Consider the following 453-residue polypeptide: Tryptophan biosynthesis protein TrpCF (453 aa).

Residues methionine 1–glutamate 257 are indole-3-glycerol phosphate synthase. The N-(5'-phosphoribosyl)anthranilate isomerase stretch occupies residues asparagine 258–tyrosine 453.

The protein in the N-terminal section; belongs to the TrpC family. It in the C-terminal section; belongs to the TrpF family. As to quaternary structure, monomer.

It catalyses the reaction N-(5-phospho-beta-D-ribosyl)anthranilate = 1-(2-carboxyphenylamino)-1-deoxy-D-ribulose 5-phosphate. The catalysed reaction is 1-(2-carboxyphenylamino)-1-deoxy-D-ribulose 5-phosphate + H(+) = (1S,2R)-1-C-(indol-3-yl)glycerol 3-phosphate + CO2 + H2O. It participates in amino-acid biosynthesis; L-tryptophan biosynthesis; L-tryptophan from chorismate: step 3/5. Its pathway is amino-acid biosynthesis; L-tryptophan biosynthesis; L-tryptophan from chorismate: step 4/5. In terms of biological role, bifunctional enzyme that catalyzes two sequential steps of tryptophan biosynthetic pathway. The first reaction is catalyzed by the isomerase, coded by the TrpF domain; the second reaction is catalyzed by the synthase, coded by the TrpC domain. The polypeptide is Tryptophan biosynthesis protein TrpCF (trpC) (Escherichia coli O157:H7).